A 536-amino-acid chain; its full sequence is CTP synthase (536 aa).

An amidoligase domain region spans residues 1 to 267 (MTKFIFVTGG…DDIVIKRLQL (267 aa)). Ser13 lines the CTP pocket. UTP is bound at residue Ser13. An ATP-binding site is contributed by 14–19 (SLGKGI). An L-glutamine-binding site is contributed by Tyr54. Asp71 is a binding site for ATP. 2 residues coordinate Mg(2+): Asp71 and Glu141. Residues 148-150 (DIE), 188-193 (KTKPTQ), and Lys224 contribute to the CTP site. Residues 188 to 193 (KTKPTQ) and Lys224 contribute to the UTP site. Residue 240–242 (RDA) participates in ATP binding. The Glutamine amidotransferase type-1 domain maps to 293–535 (TIGLVGKYVS…IEASLKYQQN (243 aa)). Residue Gly355 participates in L-glutamine binding. Cys382 serves as the catalytic Nucleophile; for glutamine hydrolysis. Residues 383–386 (LGMQ), Glu406, and Arg463 each bind L-glutamine. Residues His508 and Glu510 contribute to the active site.

It belongs to the CTP synthase family. Homotetramer.

It carries out the reaction UTP + L-glutamine + ATP + H2O = CTP + L-glutamate + ADP + phosphate + 2 H(+). It catalyses the reaction L-glutamine + H2O = L-glutamate + NH4(+). The enzyme catalyses UTP + NH4(+) + ATP = CTP + ADP + phosphate + 2 H(+). It participates in pyrimidine metabolism; CTP biosynthesis via de novo pathway; CTP from UDP: step 2/2. Allosterically activated by GTP, when glutamine is the substrate; GTP has no effect on the reaction when ammonia is the substrate. The allosteric effector GTP functions by stabilizing the protein conformation that binds the tetrahedral intermediate(s) formed during glutamine hydrolysis. Inhibited by the product CTP, via allosteric rather than competitive inhibition. Catalyzes the ATP-dependent amination of UTP to CTP with either L-glutamine or ammonia as the source of nitrogen. Regulates intracellular CTP levels through interactions with the four ribonucleotide triphosphates. The sequence is that of CTP synthase from Staphylococcus aureus (strain NCTC 8325 / PS 47).